Consider the following 222-residue polypeptide: Ras-related protein Rab11D (222 aa).

22–29 lines the GTP pocket; it reads GDSAVGKS. Positions 44 to 52 match the Effector region motif; sequence SKATIGVEF. GTP contacts are provided by residues 70-74 and 128-131; these read DTAGQ and NKTD. S-geranylgeranyl cysteine attachment occurs at residues Cys219 and Cys220.

This sequence belongs to the small GTPase superfamily. Rab family.

It is found in the cell membrane. This chain is Ras-related protein Rab11D (RAB11D), found in Nicotiana tabacum (Common tobacco).